The sequence spans 182 residues: Small ribosomal subunit protein uS4c (182 aa).

Residues 8 to 36 form a disordered region; sequence LGALPGLTSKRPGSGSDPKNKSRSGKRSQ. The S4 RNA-binding domain maps to 82–143; that stretch reads MRLDNILFRL…KQRSKALIQN (62 aa).

Belongs to the universal ribosomal protein uS4 family. As to quaternary structure, part of the 30S ribosomal subunit. Contacts protein S5. The interaction surface between S4 and S5 is involved in control of translational fidelity.

The protein resides in the plastid. It localises to the chloroplast. One of the primary rRNA binding proteins, it binds directly to 16S rRNA where it nucleates assembly of the body of the 30S subunit. Its function is as follows. With S5 and S12 plays an important role in translational accuracy. The sequence is that of Small ribosomal subunit protein uS4c (rps4) from Dietes robinsoniana (Lord Howe wedding lily).